Here is a 130-residue protein sequence, read N- to C-terminus: Small ribosomal subunit protein bS6 (130 aa).

Positions 99 to 130 (ASPMVKAKDERRERHDFASEANDDSEAGDSEE) are disordered. Over residues 104–116 (KAKDERRERHDFA) the composition is skewed to basic and acidic residues. Acidic residues predominate over residues 119 to 130 (ANDDSEAGDSEE).

The protein belongs to the bacterial ribosomal protein bS6 family.

In terms of biological role, binds together with bS18 to 16S ribosomal RNA. This is Small ribosomal subunit protein bS6 from Yersinia enterocolitica serotype O:8 / biotype 1B (strain NCTC 13174 / 8081).